A 959-amino-acid chain; its full sequence is DNA-directed RNA polymerase subunit beta'' (959 aa).

Positions 211, 288, 295, and 298 each coordinate Zn(2+).

This sequence belongs to the RNA polymerase beta' chain family. RpoC2 subfamily. As to quaternary structure, in plastids the minimal PEP RNA polymerase catalytic core is composed of four subunits: alpha, beta, beta', and beta''. When a (nuclear-encoded) sigma factor is associated with the core the holoenzyme is formed, which can initiate transcription. Zn(2+) is required as a cofactor.

The protein localises to the plastid. Its subcellular location is the apicoplast. It carries out the reaction RNA(n) + a ribonucleoside 5'-triphosphate = RNA(n+1) + diphosphate. Its function is as follows. DNA-dependent RNA polymerase catalyzes the transcription of DNA into RNA using the four ribonucleoside triphosphates as substrates. This Plasmodium falciparum (isolate 3D7) protein is DNA-directed RNA polymerase subunit beta''.